We begin with the raw amino-acid sequence, 426 residues long: Histidine--tRNA ligase (426 aa).

This sequence belongs to the class-II aminoacyl-tRNA synthetase family. In terms of assembly, homodimer.

Its subcellular location is the cytoplasm. The enzyme catalyses tRNA(His) + L-histidine + ATP = L-histidyl-tRNA(His) + AMP + diphosphate + H(+). This chain is Histidine--tRNA ligase, found in Colwellia psychrerythraea (strain 34H / ATCC BAA-681) (Vibrio psychroerythus).